A 429-amino-acid polypeptide reads, in one-letter code: Enolase (429 aa).

Q162 serves as a coordination point for (2R)-2-phosphoglycerate. E204 functions as the Proton donor in the catalytic mechanism. Mg(2+)-binding residues include D241, E286, and D313. (2R)-2-phosphoglycerate contacts are provided by K338, R367, S368, and K389. K338 acts as the Proton acceptor in catalysis.

It belongs to the enolase family. The cofactor is Mg(2+).

Its subcellular location is the cytoplasm. It is found in the secreted. It localises to the cell surface. It catalyses the reaction (2R)-2-phosphoglycerate = phosphoenolpyruvate + H2O. It functions in the pathway carbohydrate degradation; glycolysis; pyruvate from D-glyceraldehyde 3-phosphate: step 4/5. Functionally, catalyzes the reversible conversion of 2-phosphoglycerate (2-PG) into phosphoenolpyruvate (PEP). It is essential for the degradation of carbohydrates via glycolysis. The polypeptide is Enolase (Shouchella clausii (strain KSM-K16) (Alkalihalobacillus clausii)).